We begin with the raw amino-acid sequence, 931 residues long: Ribosome-releasing factor 2, mitochondrial (931 aa).

The tr-type G domain maps to 63–379; sequence EKTRNIGIIA…AVNNLLPGPS (317 aa). Residues 72–79, 162–166, and 216–219 each bind GTP; these read AHIDAGKT, DTPGH, and NKLD.

It belongs to the TRAFAC class translation factor GTPase superfamily. Classic translation factor GTPase family. EF-G/EF-2 subfamily.

It is found in the mitochondrion. Functionally, mitochondrial GTPase that mediates the disassembly of ribosomes from messenger RNA at the termination of mitochondrial protein biosynthesis. Not involved in the GTP-dependent ribosomal translocation step during translation elongation. The sequence is that of Ribosome-releasing factor 2, mitochondrial (mef2) from Talaromyces stipitatus (strain ATCC 10500 / CBS 375.48 / QM 6759 / NRRL 1006) (Penicillium stipitatum).